The sequence spans 121 residues: Large ribosomal subunit protein uL14 (121 aa).

This sequence belongs to the universal ribosomal protein uL14 family. In terms of assembly, part of the 50S ribosomal subunit. Forms a cluster with proteins L3 and L19. In the 70S ribosome, L14 and L19 interact and together make contacts with the 16S rRNA in bridges B5 and B8.

Binds to 23S rRNA. Forms part of two intersubunit bridges in the 70S ribosome. This is Large ribosomal subunit protein uL14 from Synechococcus sp. (strain RCC307).